We begin with the raw amino-acid sequence, 123 residues long: Small ribosomal subunit protein uS13 (123 aa).

The disordered stretch occupies residues 97–123; sequence PVRGQRTHTNAKTRKGRSKLPVAAKKK.

The protein belongs to the universal ribosomal protein uS13 family. Part of the 30S ribosomal subunit. Forms a loose heterodimer with protein S19. Forms two bridges to the 50S subunit in the 70S ribosome.

In terms of biological role, located at the top of the head of the 30S subunit, it contacts several helices of the 16S rRNA. In the 70S ribosome it contacts the 23S rRNA (bridge B1a) and protein L5 of the 50S subunit (bridge B1b), connecting the 2 subunits; these bridges are implicated in subunit movement. Contacts the tRNAs in the A and P-sites. The protein is Small ribosomal subunit protein uS13 of Ehrlichia chaffeensis (strain ATCC CRL-10679 / Arkansas).